A 258-amino-acid chain; its full sequence is Imidazole glycerol phosphate synthase subunit HisF (258 aa).

Residues Asp-11 and Asp-130 contribute to the active site.

This sequence belongs to the HisA/HisF family. As to quaternary structure, heterodimer of HisH and HisF.

The protein localises to the cytoplasm. The enzyme catalyses 5-[(5-phospho-1-deoxy-D-ribulos-1-ylimino)methylamino]-1-(5-phospho-beta-D-ribosyl)imidazole-4-carboxamide + L-glutamine = D-erythro-1-(imidazol-4-yl)glycerol 3-phosphate + 5-amino-1-(5-phospho-beta-D-ribosyl)imidazole-4-carboxamide + L-glutamate + H(+). The protein operates within amino-acid biosynthesis; L-histidine biosynthesis; L-histidine from 5-phospho-alpha-D-ribose 1-diphosphate: step 5/9. Functionally, IGPS catalyzes the conversion of PRFAR and glutamine to IGP, AICAR and glutamate. The HisF subunit catalyzes the cyclization activity that produces IGP and AICAR from PRFAR using the ammonia provided by the HisH subunit. The sequence is that of Imidazole glycerol phosphate synthase subunit HisF from Synechococcus sp. (strain CC9902).